A 523-amino-acid polypeptide reads, in one-letter code: BTB/POZ domain-containing protein 3 (523 aa).

Residues Phe85–Arg114 form an ANK repeat. BTB domains lie at Thr167–Tyr223 and His306–Pro373.

As to quaternary structure, interacts with cul3. Post-translationally, ubiquitinated and targeted for cul3-dependent degradation.

It localises to the cytoplasm. Its pathway is protein modification; protein ubiquitination. Its function is as follows. Probable substrate-specific adapter of an E3 ubiquitin-protein ligase complex which mediates the ubiquitination and subsequent proteasomal degradation of target proteins. This is BTB/POZ domain-containing protein 3 (btb3) from Schizosaccharomyces pombe (strain 972 / ATCC 24843) (Fission yeast).